Reading from the N-terminus, the 412-residue chain is Vacuolar calcium ion transporter (412 aa).

The Cytoplasmic portion of the chain corresponds to 1–55 (MIERLKIAKNRLEAMNSFNFPAQDRHERAPLLGSEYDHSMARQLSLLNVVGMTKS). Residues 56-76 (VLMSSYFNLMLVFVPIGLIAG) form a helical membrane-spanning segment. The Lumenal portion of the chain corresponds to 77 to 83 (WFEWNAK). Residues 84-104 (SVFILNMLAIIPLASLLSFAT) traverse the membrane as a helical segment. Residues 105-114 (EQLSIISGPT) lie on the Cytoplasmic side of the membrane. The chain crosses the membrane as a helical span at residues 115–135 (LGALLNASFGNAIELIVGVLA). At 136-148 (LKRGELRIVQSSL) the chain is on the lumenal side. A helical transmembrane segment spans residues 149–169 (LGSILSNLLLVFGMCLVTTGI). Residues 170-177 (RREITTFN) are Cytoplasmic-facing. Residues 178–198 (ITVAQTMIAMLALSTATILIP) form a helical membrane-spanning segment. At 199 to 215 (ATFHYSLPDNANSENAL) the chain is on the lumenal side. Residues 216-236 (LHVSRGTAVIVLIVYVLLLVF) traverse the membrane as a helical segment. Topologically, residues 237-264 (QLKTHKHVCHDPSEVEEETEPRILGLRS) are cytoplasmic. A helical membrane pass occupies residues 265 to 285 (SIAMLAIVTVFVSLCADYLVG). Residues 286–299 (SIDQLVEEVNISKT) lie on the Lumenal side of the membrane. A helical membrane pass occupies residues 300 to 320 (FVGLVILPVVGNAAEHVTAIV). Topologically, residues 321-334 (VSYRGQMDLALGVA) are cytoplasmic. Residues 335–355 (IGSSIQIALFLAPFLVIVGWI) form a helical membrane-spanning segment. The Lumenal segment spans residues 356–358 (ISQ). Residues 359-379 (PLTLYFESLETVILFVSVFLV) form a helical membrane-spanning segment. At 380-389 (NYLIQDGATH) the chain is on the cytoplasmic side. The helical transmembrane segment at 390-410 (WLEGVQLLALYAIVVLAFFYY) threads the bilayer. The Lumenal portion of the chain corresponds to 411 to 412 (PQ).

It belongs to the Ca(2+):cation antiporter (CaCA) (TC 2.A.19) family.

The protein localises to the vacuole membrane. The protein resides in the endoplasmic reticulum membrane. In terms of biological role, has a role in promoting intracellular calcium ion sequestration via the exchange of calcium ions for hydrogen ions across the vacuolar membrane. Involved also in manganese ion homeostasis via its uptake into the vacuole. This Schizosaccharomyces pombe (strain 972 / ATCC 24843) (Fission yeast) protein is Vacuolar calcium ion transporter (vcx1).